The following is a 726-amino-acid chain: Catalase-peroxidase (726 aa).

The segment at residues 85–208 (WHSAGSYRIH…FAATEMGLIY (124 aa)) is a cross-link (tryptophyl-tyrosyl-methioninium (Trp-Tyr) (with M-234)). Catalysis depends on His-86, which acts as the Proton acceptor. A cross-link (tryptophyl-tyrosyl-methioninium (Tyr-Met) (with W-85)) is located at residues 208 to 234 (YVNPEGPMGNPDPSGSAKEIRLAFTRM). Heme b is bound at residue His-249.

This sequence belongs to the peroxidase family. Peroxidase/catalase subfamily. Homodimer or homotetramer. Heme b serves as cofactor. Formation of the three residue Trp-Tyr-Met cross-link is important for the catalase, but not the peroxidase activity of the enzyme.

It catalyses the reaction H2O2 + AH2 = A + 2 H2O. The enzyme catalyses 2 H2O2 = O2 + 2 H2O. Functionally, bifunctional enzyme with both catalase and broad-spectrum peroxidase activity. This Pseudothermotoga lettingae (strain ATCC BAA-301 / DSM 14385 / NBRC 107922 / TMO) (Thermotoga lettingae) protein is Catalase-peroxidase.